We begin with the raw amino-acid sequence, 107 residues long: uncharacterized protein (107 aa).

This is an uncharacterized protein from Autographa californica nuclear polyhedrosis virus (AcMNPV).